We begin with the raw amino-acid sequence, 168 residues long: Segregation and condensation protein B (168 aa).

Belongs to the ScpB family. As to quaternary structure, homodimer. Homodimerization may be required to stabilize the binding of ScpA to the Smc head domains. Component of a cohesin-like complex composed of ScpA, ScpB and the Smc homodimer, in which ScpA and ScpB bind to the head domain of Smc. The presence of the three proteins is required for the association of the complex with DNA.

Its subcellular location is the cytoplasm. Functionally, participates in chromosomal partition during cell division. May act via the formation of a condensin-like complex containing Smc and ScpA that pull DNA away from mid-cell into both cell halves. This is Segregation and condensation protein B from Caldanaerobacter subterraneus subsp. tengcongensis (strain DSM 15242 / JCM 11007 / NBRC 100824 / MB4) (Thermoanaerobacter tengcongensis).